The chain runs to 551 residues: MSDIAITISLLALVAVIGLWIGHWKIRGVGLGIGGVLFGGIIVAHFTNQYGLKLDAHTLHFVQEFGLILFVYTIGIQVGPGFFSSLRKSGLKLNAFAILIILLGSIAVVLVHKIADVPLDIALGIYSGAVTNTPALGAGQQILAELGVPQTTVTMGVSYAMAYPFGICGILLAMWLIRLFFNVKVDDEAARFNAESSQDKESLHNISLKVTNQNLDGLTLIQIPGFSDEEVVCSRLKRDDMEIVPKASTEIRTNDILQLVGDDNSLAKMRLIIGHEVDAPTVAYSGEIRSERVVVTNEKVLGKKIRALGIHQKYGVVISRLNRAGIELVPTGNTTLQFGDVLHMVGRSDVLNQAISVIGNAQQKLLQVQMLPVFIGIGLGVLVGSIPFYIPGFPVALKLGLAGGPLVVALILARIGTIGKLYWFMPPSANLALREIGIVLFLAVVGLKSGGSFFDTLVNGSGLEWMGYGIFITFVPLIIVGTIARLYGKLNYLTICGLLAGSMTDPPALAFANEIKEDNGAAALSYATVYPLVMFLRIMSPQLLAVLLWAA.

The next 5 helical transmembrane spans lie at 4–24 (IAIT…IGHW), 28–48 (GVGL…HFTN), 65–85 (FGLI…FFSS), 95–115 (AFAI…HKIA), and 157–177 (VSYA…MWLI). 2 consecutive RCK C-terminal domains span residues 191–275 (RFNA…IIGH) and 277–360 (VDAP…VIGN). 6 consecutive transmembrane segments (helical) span residues 370-390 (MLPV…PFYI), 402-424 (AGGP…LYWF), 438-458 (IVLF…DTLV), 463-483 (LEWM…VGTI), 492-512 (YLTI…LAFA), and 529-549 (VYPL…VLLW).

The protein belongs to the AAE transporter (TC 2.A.81) family. YidE subfamily.

The protein resides in the cell membrane. The protein is Putative transport protein HI_0035 of Haemophilus influenzae (strain ATCC 51907 / DSM 11121 / KW20 / Rd).